The following is a 441-amino-acid chain: Arginine biosynthesis bifunctional protein ArgJ, mitochondrial (441 aa).

Residues T177, K204, T215, E301, N436, and S441 each contribute to the substrate site. Residue T215 is the Nucleophile of the active site.

It belongs to the ArgJ family. Heterodimer of an alpha and a beta chain. In terms of processing, the alpha and beta chains are autoproteolytically processed from a single precursor protein within the mitochondrion.

The protein localises to the mitochondrion matrix. The catalysed reaction is N(2)-acetyl-L-ornithine + L-glutamate = N-acetyl-L-glutamate + L-ornithine. It carries out the reaction L-glutamate + acetyl-CoA = N-acetyl-L-glutamate + CoA + H(+). It functions in the pathway amino-acid biosynthesis; L-arginine biosynthesis; L-ornithine and N-acetyl-L-glutamate from L-glutamate and N(2)-acetyl-L-ornithine (cyclic): step 1/1. The protein operates within amino-acid biosynthesis; L-arginine biosynthesis; N(2)-acetyl-L-ornithine from L-glutamate: step 1/4. Its function is as follows. Catalyzes two activities which are involved in the cyclic version of arginine biosynthesis: the synthesis of acetylglutamate from glutamate and acetyl-CoA, and of ornithine by transacetylation between acetylornithine and glutamate. The polypeptide is Arginine biosynthesis bifunctional protein ArgJ, mitochondrial (Candida glabrata (strain ATCC 2001 / BCRC 20586 / JCM 3761 / NBRC 0622 / NRRL Y-65 / CBS 138) (Yeast)).